Here is a 124-residue protein sequence, read N- to C-terminus: Small ribosomal subunit protein bS6 (124 aa).

Residues 97-124 (EQGPSAMMRRGDRDRSNRSDRRRDRDAA) form a disordered region. Positions 105 to 124 (RRGDRDRSNRSDRRRDRDAA) are enriched in basic and acidic residues.

It belongs to the bacterial ribosomal protein bS6 family.

In terms of biological role, binds together with bS18 to 16S ribosomal RNA. This is Small ribosomal subunit protein bS6 from Zymomonas mobilis subsp. mobilis (strain ATCC 31821 / ZM4 / CP4).